The chain runs to 437 residues: Nuclear distribution protein PAC1 (437 aa).

A coiled-coil region spans residues 64 to 94 (LSVIRLQRKVMDLETRLEAAEREASSTHKAN). WD repeat units follow at residues 114–153 (LHKQPVNAVSFHPFHSTLASACEDGNIRIWDYELGEIETT), 156–217 (AHTR…ANVK), 221–260 (GHDHTISAVKFTASGNHVISASRDKTVRVWSVQSGYCVRT), 263–301 (GHTDWVKSCAALNEEFIFSAGIDHVTRVSEFVSGDGKMT), 304–356 (GHEH…LLIL), 358–397 (GHDNWVRGVVLHPAGRYLVSVSDDKTMRCWDLEQGGRCIR), and 401–437 (AHGHFVTCVAWAPNDVNGRVRCLVATGGVDGQVKVWQ). The interval 165-186 (DFSQPDTGASRDKSHDKPRADV) is disordered. Residues 173 to 186 (ASRDKSHDKPRADV) show a composition bias toward basic and acidic residues.

Belongs to the WD repeat LIS1/nudF family. Self-associates. Interacts with NDL1 and dynein.

Its subcellular location is the cytoplasm. The protein resides in the cytoskeleton. The protein localises to the spindle pole. Functionally, positively regulates the activity of the minus-end directed microtubule motor protein dynein. Plays a central role in positioning the mitotic spindle at the bud neck during cell division. Targets cytoplasmic dynein to microtubule plus ends, thereby promoting dynein-mediated microtubule sliding along the bud cortex and consequently the movement of the mitotic spindle to the bud neck. This Yarrowia lipolytica (strain CLIB 122 / E 150) (Yeast) protein is Nuclear distribution protein PAC1.